Here is a 197-residue protein sequence, read N- to C-terminus: MENHEPDGTIIKENLTDIIARKINQLPEAERNLLENGSTYVGLNAALCGLIANSLFRRILHVTQARIAAGLPMAVIPFLTANVSYKGFVSLPLNTGDLQCETCTVTRGGLVGLVFGGLYPVFLAIPVNGGLAARYNSALLPEKGNILNYWIRISKPVFRKMLFPILLQTGFAAYLGSRQYKLLIKALQLPEPGLEIE.

Topologically, residues 1-35 (MENHEPDGTIIKENLTDIIARKINQLPEAERNLLE) are mitochondrial matrix. A helical transmembrane segment spans residues 36–56 (NGSTYVGLNAALCGLIANSLF). Topologically, residues 57–58 (RR) are mitochondrial intermembrane. Residues 59-79 (ILHVTQARIAAGLPMAVIPFL) traverse the membrane as a helical segment. The Mitochondrial matrix segment spans residues 80-107 (TANVSYKGFVSLPLNTGDLQCETCTVTR). Residues 108-128 (GGLVGLVFGGLYPVFLAIPVN) form a helical membrane-spanning segment. Residues 129–160 (GGLAARYNSALLPEKGNILNYWIRISKPVFRK) lie on the Mitochondrial intermembrane side of the membrane. The chain crosses the membrane as a helical span at residues 161–177 (MLFPILLQTGFAAYLGS). At 178-197 (RQYKLLIKALQLPEPGLEIE) the chain is on the mitochondrial matrix side.

Belongs to the TMEM126 family. In terms of assembly, interacts with OXA1L; promoting cotranslational quality control in mitochondria.

The protein localises to the mitochondrion inner membrane. Its function is as follows. Protein required for the cotranslational protein quality control in the inner membrane of the mitochondria. Associates with newly synthesized polypeptides and may act as a chaperone that cooperates with OXA1L for the insertion of newly synthesized mitochondrial proteins into the inner membrane. Required for the assembly of the ND4 module of mitochondrial complex I. This chain is Transmembrane protein 126A (TMEM126A), found in Bos taurus (Bovine).